The sequence spans 541 residues: Transcription factor STP2 (541 aa).

The tract at residues 13-32 (VLTRIYDYLKALVQQVIVPN) is i. A disordered region spans residues 35 to 58 (DDKSSKSTPFEKLEPAKQNHPQKD). An II region spans residues 73–105 (LFPKQNNKQLSLTSKSSVVPCALNLDNLETPFS). The C2H2-type 1 zinc-finger motif lies at 204–226 (YICHYCDARFRIRGYLTRHIKKH). The C2H2-type 2; atypical zinc-finger motif lies at 232–267 (YHCPFFDNSISQELRCHTSGGFSRRDTYKTHLKSRH). The segment at 284–309 (GVCTQCGEHFSTSESWVENHIEAGSC) adopts a C2H2-type 3; atypical zinc-finger fold. Residues 452–462 (SSASSALSPLS) are compositionally biased toward low complexity. The interval 452–497 (SSASSALSPLSGDPITTTETNKSYPLDSEQSLLEPDKTEEDAINQS) is disordered. Residues 465 to 482 (PITTTETNKSYPLDSEQS) are compositionally biased toward polar residues.

In terms of assembly, interacts (via Region II) with SSY5; protease component of the SPS-sensor. Post-translationally, activated by the amino acid-induced proteolytic removal of an N-terminal inhibitory domain by serine protease SSY5, an intrinsic component of the SPS-sensor. Processing requires at least 2 components of the SCF(GRR1) ubiquitin ligase complex, namely the F-box protein GRR1 and the E2 enzyme CDC34, but does not depend on the proteasome. Processing is negatively regulated by the protein phosphatase 2A regulatory subunit RTS1.

The protein localises to the cell membrane. It is found in the nucleus. Functionally, transcription factor involved in the regulation of gene expression in response to extracellular amino acid levels. Synthesized as latent cytoplasmic precursor, which, upon a signal initiated by the plasma membrane SPS (SSY1-PTR3-SSY5) amino acid sensor system, becomes proteolytically activated and relocates to the nucleus, where it induces the expression of SPS-sensor-regulated genes, including the amino-acid permeases BAP2 and BAP3. Binding to promoters is facilitated by DAL81. Involved in the repression of genes subject to nitrogen catabolite repression and genes involved in stress response. Negatively regulated by inner nuclear membrane proteins ASI1, ASI2 and ASI3, which prevent unprocessed precursor forms that escape cytoplasmic anchoring from inducing SPS-sensor-regulated genes. This Saccharomyces cerevisiae (strain ATCC 204508 / S288c) (Baker's yeast) protein is Transcription factor STP2 (STP2).